Reading from the N-terminus, the 143-residue chain is MTDMATGNAPELLVELTADIVAAYVSNHVVPVSDLANLISDVHSALSNTSVPQPAAAVVEKQKPAVSVRKSVQDEQITCLECGGNFKSLKRHLMTHHSLSPEEYREKWDLPTDYPMVAPAYAEARSRLAKEMGLGQRRKRGRG.

A C2H3-type zinc finger spans residues 79–97 (CLECGGNFKSLKRHLMTHH).

This sequence belongs to the ros/MucR family.

This chain is Transcriptional regulatory protein RosR (rosR), found in Rhizobium etli (strain ATCC 51251 / DSM 11541 / JCM 21823 / NBRC 15573 / CFN 42).